The following is a 712-amino-acid chain: Small ribosomal subunit protein uS3c (712 aa).

An S3-like 1st part region spans residues 1–118 (MGQKVHPLGF…IKVSKDLVTN (118 aa)). The intervening sequence (IVS) stretch occupies residues 119-580 (LQKTRKYLFK…LQTAFLTQIE (462 aa)). The segment at 581–712 (SQRKMYKANL…VWIFKGYSKI (132 aa)) is S3-like 2nd part.

The protein belongs to the universal ribosomal protein uS3 family. Part of the 30S ribosomal subunit.

The protein localises to the plastid. It is found in the chloroplast. The polypeptide is Small ribosomal subunit protein uS3c (rps3) (Chlamydomonas reinhardtii (Chlamydomonas smithii)).